A 433-amino-acid polypeptide reads, in one-letter code: MSFPKELEKVLEITKAQNVWRRTQTLNLIASENVMSPLAESVYMSDFMSRYAEGKPYKRYYQGTKYTDEIETLAMDLMNEITNSKDCDLRPTSGTIANAAVFRVLAEPGDKALIAPVQAGAHVSHTKFGTLGALGIQHIEMPFDEENINVDVDKAIKMIEEVKPKFVVLGGSLYLFPHPTKELAPHVHAVGAKLVYDAAHVYGLIEGKVWSSPLKEGADIMTVSTHKTFPGPQGGAIFSDGSEVFKQVSRTIFPWFVSNHHLHRLPATAVTAIEMKYFGESYANQITRNSKALAEALAERGFKVIGENLGYTKSHQVAVDVRQFGGGNKIAKLLEDANIIVNKNLLPYDKPENVSDPSGLRIGVQEMTRYGMKESEMEEIAELFKKVIIDKKDVNEVKKEVIDMRKNFLEVKYTFDDMKDLEKYSSKSLKLII.

121-123 (AHV) serves as a coordination point for (6S)-5,6,7,8-tetrahydrofolate. K227 carries the N6-(pyridoxal phosphate)lysine modification. E243 provides a ligand contact to (6S)-5,6,7,8-tetrahydrofolate.

It belongs to the SHMT family. In terms of assembly, homodimer. It depends on pyridoxal 5'-phosphate as a cofactor.

Its subcellular location is the cytoplasm. It functions in the pathway amino-acid biosynthesis; glycine biosynthesis; glycine from L-serine: step 1/1. Functionally, catalyzes the reversible interconversion of serine and glycine with a modified folate serving as the one-carbon carrier. Also exhibits a pteridine-independent aldolase activity toward beta-hydroxyamino acids, producing glycine and aldehydes, via a retro-aldol mechanism. This is Serine hydroxymethyltransferase from Saccharolobus islandicus (strain Y.N.15.51 / Yellowstone #2) (Sulfolobus islandicus).